A 545-amino-acid chain; its full sequence is Probable protein kinase UbiB (545 aa).

A Protein kinase domain is found at 123-501 (DFDIVPLASA…RVRQHQSHYL (379 aa)). ATP-binding positions include 129–137 (LASASIAQV) and K152. D287 functions as the Proton acceptor in the catalytic mechanism. 2 helical membrane passes run 498-518 (SHYL…VVLS) and 521-541 (EWDG…LVGW).

It belongs to the ABC1 family. UbiB subfamily.

The protein resides in the cell inner membrane. The protein operates within cofactor biosynthesis; ubiquinone biosynthesis [regulation]. Is probably a protein kinase regulator of UbiI activity which is involved in aerobic coenzyme Q (ubiquinone) biosynthesis. The protein is Probable protein kinase UbiB of Erwinia tasmaniensis (strain DSM 17950 / CFBP 7177 / CIP 109463 / NCPPB 4357 / Et1/99).